The sequence spans 677 residues: Testis-specific Y-encoded-like protein 2 (677 aa).

The segment at 1–54 is disordered; it reads MDRPDEGPPAKTPRLSSSEPRQRDLPPPPPPPLQRLPLPPPQQRPRPQEETEAA. Residue Lys-11 forms a Glycyl lysine isopeptide (Lys-Gly) (interchain with G-Cter in SUMO2) linkage. Ser-18 carries the post-translational modification Phosphoserine. A compositionally biased stretch (pro residues) spans 25–44; that stretch reads LPPPPPPPLQRLPLPPPQQR. Residues Lys-158 and Lys-160 each participate in a glycyl lysine isopeptide (Lys-Gly) (interchain with G-Cter in SUMO2) cross-link. Residues 175–202 are disordered; the sequence is KESVRRRQRRRRRRRKQRKAKESRERSA. Positions 178 to 193 are enriched in basic residues; sequence VRRRQRRRRRRRKQRK. Thr-333 is subject to Phosphothreonine. The segment at 469–658 is disordered; that stretch reads ANENLCDSEN…EVNSEDSDIQ (190 aa). The span at 484–493 shows a compositional bias: polar residues; it reads GYNTKITDNK. The span at 509-525 shows a compositional bias: basic and acidic residues; sequence EKNTYDSEDSNSEKADG. Residues 526–540 are compositionally biased toward polar residues; the sequence is DNTTLRDNQQVTNIQ. 2 stretches are compositionally biased toward acidic residues: residues 543–581 and 606–627; these read SDSDNGDEGSDDEDDDGNEGDNEGSDDDDDDNEGSDDDD and DYEEEVELISEDSVEEEEETSE. Positions 639 to 650 are enriched in basic and acidic residues; that stretch reads DERIYGEERSEV. 3 positions are modified to phosphoserine: Ser-648, Ser-652, and Ser-655.

The protein belongs to the nucleosome assembly protein (NAP) family. In terms of assembly, interacts with histones. Interacts with CASK. Part of a complex containing CASK, TBR1 and TSPYL2. Phosphorylation at Thr-333 impairs function on cell proliferation. In terms of tissue distribution, present at high levels in the pituitary gland and at moderate levels in adrenal gland, brain, testis and ovary. In brain, expressed both in mature neurons and progenitor cells (at protein level).

The protein resides in the nucleus. Its subcellular location is the cytoplasm. Part of the CASK/TBR1/TSPYL2 transcriptional complex which modulates gene expression in response to neuronal synaptic activity, probably by facilitating nucleosome assembly. May inhibit cell proliferation by inducing p53-dependent CDKN1A expression. This Mus musculus (Mouse) protein is Testis-specific Y-encoded-like protein 2 (Tspyl2).